The sequence spans 288 residues: ATP synthase gamma chain (288 aa).

Belongs to the ATPase gamma chain family. As to quaternary structure, F-type ATPases have 2 components, CF(1) - the catalytic core - and CF(0) - the membrane proton channel. CF(1) has five subunits: alpha(3), beta(3), gamma(1), delta(1), epsilon(1). CF(0) has three main subunits: a, b and c.

It is found in the cell membrane. Produces ATP from ADP in the presence of a proton gradient across the membrane. The gamma chain is believed to be important in regulating ATPase activity and the flow of protons through the CF(0) complex. The chain is ATP synthase gamma chain from Staphylococcus saprophyticus subsp. saprophyticus (strain ATCC 15305 / DSM 20229 / NCIMB 8711 / NCTC 7292 / S-41).